Consider the following 216-residue polypeptide: Large ribosomal subunit protein uL3 (216 aa).

Positions 137-158 (GASHGAHKNHRKPGSIGGASTP) are disordered.

Belongs to the universal ribosomal protein uL3 family. Part of the 50S ribosomal subunit. Forms a cluster with proteins L14 and L19.

In terms of biological role, one of the primary rRNA binding proteins, it binds directly near the 3'-end of the 23S rRNA, where it nucleates assembly of the 50S subunit. The polypeptide is Large ribosomal subunit protein uL3 (Arthrobacter sp. (strain FB24)).